We begin with the raw amino-acid sequence, 145 residues long: Pleckstrin homology domain-containing protein 1 (145 aa).

One can recognise a PH domain in the interval 26 to 127 (NPERSGWLTK…WINSIGRSIV (102 aa)). A binds specifically PtdIns3P region spans residues 29 to 53 (RSGWLTKQGDYIKTWRRRWFVLKRG).

Binds PtdIns3P. As to expression, ubiquitously expressed.

The protein resides in the cytoplasm. In terms of biological role, binds specifically to phosphatidylinositol 3-phosphate (PtdIns3P), but not to other phosphoinositides. This Arabidopsis thaliana (Mouse-ear cress) protein is Pleckstrin homology domain-containing protein 1 (PH1).